The following is a 1733-amino-acid chain: Protein NETWORKED 1D (1733 aa).

In terms of domain architecture, NAB spans 12 to 92; it reads YSWWWDSHIS…ERYDHATGVI (81 aa). 4 coiled-coil regions span residues 195-816, 897-931, 960-1043, and 1196-1386; these read KEIN…RESS, LIAE…QIDS, DENS…QKLI, and ARSA…NDLM. The disordered stretch occupies residues 1456–1476; it reads LKTSSARRSRRRNGSLRKQNH. Over residues 1460–1470 the composition is skewed to basic residues; it reads SARRSRRRNGS. 2 coiled-coil regions span residues 1553 to 1627 and 1653 to 1686; these read ANKR…KVQN and SEQA…DRED. Residues 1628–1656 are disordered; that stretch reads GFERSDGSKSSMDLDENESSRRRRISEQA.

It belongs to the NET family.

Functionally, plant-specific actin binding protein. May be part of a membrane-cytoskeletal adapter complex. This is Protein NETWORKED 1D from Arabidopsis thaliana (Mouse-ear cress).